The sequence spans 221 residues: C-8 sterol isomerase (221 aa).

Residues 5–25 (ISGFLRFVAVLLAVVSPLVYL) traverse the membrane as a helical segment.

The protein belongs to the ERG2 family.

Its subcellular location is the endoplasmic reticulum membrane. The protein operates within steroid metabolism; ergosterol biosynthesis; ergosterol from zymosterol: step 2/5. In terms of biological role, catalyzes the reaction which results in unsaturation at C-7 in the B ring of sterols. This is C-8 sterol isomerase (ERG2) from Pyricularia oryzae (strain 70-15 / ATCC MYA-4617 / FGSC 8958) (Rice blast fungus).